Reading from the N-terminus, the 236-residue chain is DNA repair protein RecO (236 aa).

The protein belongs to the RecO family.

Its function is as follows. Involved in DNA repair and RecF pathway recombination. This chain is DNA repair protein RecO, found in Rickettsia typhi (strain ATCC VR-144 / Wilmington).